The primary structure comprises 296 residues: Bifunctional protein FolD (296 aa).

NADP(+) contacts are provided by residues 169–171 (GRG), threonine 196, and valine 237.

The protein belongs to the tetrahydrofolate dehydrogenase/cyclohydrolase family. In terms of assembly, homodimer.

It catalyses the reaction (6R)-5,10-methylene-5,6,7,8-tetrahydrofolate + NADP(+) = (6R)-5,10-methenyltetrahydrofolate + NADPH. It carries out the reaction (6R)-5,10-methenyltetrahydrofolate + H2O = (6R)-10-formyltetrahydrofolate + H(+). It functions in the pathway one-carbon metabolism; tetrahydrofolate interconversion. Functionally, catalyzes the oxidation of 5,10-methylenetetrahydrofolate to 5,10-methenyltetrahydrofolate and then the hydrolysis of 5,10-methenyltetrahydrofolate to 10-formyltetrahydrofolate. This is Bifunctional protein FolD from Kocuria rhizophila (strain ATCC 9341 / DSM 348 / NBRC 103217 / DC2201).